The chain runs to 1058 residues: Lon protease homolog, mitochondrial (1058 aa).

A mitochondrion-targeting transit peptide spans 1-47; the sequence is MLTRIRNAGVGGNAARRVRLLAGYTGARMAHAAALNSTTGAGGAARA. A disordered region spans residues 72-151; it reads GGQCILKQDR…RSNPPSEGEV (80 aa). Composition is skewed to basic and acidic residues over residues 78–97 and 106–118; these read KQDREPDQSDDKKVPPRAEE and DEEAERQPREEQA. A compositionally biased stretch (gly residues) spans 129-142; it reads GSGGSASSAGGGGR. In terms of domain architecture, Lon N-terminal spans 158 to 412; sequence LMVLPMSNRP…KALVFIKKEV (255 aa). An ATP-binding site is contributed by 564–571; the sequence is GPPGVGKT. The disordered stretch occupies residues 778-814; the sequence is TPKSAPAETNIEPENGKPDASAKPLTNNLPAPEPLNI. The Lon proteolytic domain maps to 844-1030; it reads KTPAGVVMGL…DDVFNVLFGS (187 aa). Active-site residues include serine 936 and lysine 979.

It belongs to the peptidase S16 family. Homohexamer or homoheptamer. Organized in a ring with a central cavity.

The protein resides in the mitochondrion matrix. The catalysed reaction is Hydrolysis of proteins in presence of ATP.. Functionally, ATP-dependent serine protease that mediates the selective degradation of misfolded, unassembled or oxidatively damaged polypeptides as well as certain short-lived regulatory proteins in the mitochondrial matrix. May also have a chaperone function in the assembly of inner membrane protein complexes. Participates in the regulation of mitochondrial gene expression and in the maintenance of the integrity of the mitochondrial genome. Binds to mitochondrial DNA in a site-specific manner. The polypeptide is Lon protease homolog, mitochondrial (Eremothecium gossypii (strain ATCC 10895 / CBS 109.51 / FGSC 9923 / NRRL Y-1056) (Yeast)).